Consider the following 455-residue polypeptide: Glutamyl-tRNA(Gln) amidotransferase subunit A (455 aa).

Active-site charge relay system residues include Lys74 and Ser149. The Acyl-ester intermediate role is filled by Ser173.

Belongs to the amidase family. GatA subfamily. In terms of assembly, heterotrimer of A, B and C subunits.

It carries out the reaction L-glutamyl-tRNA(Gln) + L-glutamine + ATP + H2O = L-glutaminyl-tRNA(Gln) + L-glutamate + ADP + phosphate + H(+). Allows the formation of correctly charged Gln-tRNA(Gln) through the transamidation of misacylated Glu-tRNA(Gln) in organisms which lack glutaminyl-tRNA synthetase. The reaction takes place in the presence of glutamine and ATP through an activated gamma-phospho-Glu-tRNA(Gln). This Methanosphaera stadtmanae (strain ATCC 43021 / DSM 3091 / JCM 11832 / MCB-3) protein is Glutamyl-tRNA(Gln) amidotransferase subunit A.